We begin with the raw amino-acid sequence, 257 residues long: Snake venom serine protease KN2 (257 aa).

The first 18 residues, 1-18, serve as a signal peptide directing secretion; that stretch reads MVLIRVLANLLILQLSYA. Residues 19-24 constitute a propeptide that is removed on maturation; that stretch reads QKSSEL. Residues 25-248 enclose the Peptidase S1 domain; sequence VIGGHPCNIN…HLDWIKSIIA (224 aa). 6 cysteine pairs are disulfide-bonded: C31–C162, C49–C65, C97–C255, C141–C209, C173–C188, and C199–C224. Active-site charge relay system residues include H64 and D109. 2 N-linked (GlcNAc...) asparagine glycosylation sites follow: N120 and N121. S203 serves as the catalytic Charge relay system.

Belongs to the peptidase S1 family. Snake venom subfamily. Monomer. In terms of tissue distribution, expressed by the venom gland.

Its subcellular location is the secreted. In terms of biological role, snake venom serine protease that may act in the hemostasis system of the prey. The polypeptide is Snake venom serine protease KN2 (Trimeresurus stejnegeri (Chinese green tree viper)).